A 199-amino-acid polypeptide reads, in one-letter code: Glycerol-3-phosphate acyltransferase (199 aa).

5 helical membrane-spanning segments follow: residues 3-23 (YILIGLISYFCGAIPFSYLLP), 50-70 (VIGFICMVLDGVKAFVPVLVF), 77-97 (IHYTGISSIFAVLGHDFPVFL), 110-130 (GVFFALCPICGFTFLATWISI), and 136-156 (YVSLASIVGMYAASFVAFFFN).

It belongs to the PlsY family. Probably interacts with PlsX.

Its subcellular location is the cell inner membrane. It catalyses the reaction an acyl phosphate + sn-glycerol 3-phosphate = a 1-acyl-sn-glycero-3-phosphate + phosphate. It functions in the pathway lipid metabolism; phospholipid metabolism. Functionally, catalyzes the transfer of an acyl group from acyl-phosphate (acyl-PO(4)) to glycerol-3-phosphate (G3P) to form lysophosphatidic acid (LPA). This enzyme utilizes acyl-phosphate as fatty acyl donor, but not acyl-CoA or acyl-ACP. The sequence is that of Glycerol-3-phosphate acyltransferase from Pseudothermotoga lettingae (strain ATCC BAA-301 / DSM 14385 / NBRC 107922 / TMO) (Thermotoga lettingae).